Consider the following 245-residue polypeptide: Dehydrogenase/reductase SDR family member 6 (245 aa).

Residues 16–18 (QGI), Asp-37, and Asp-58 contribute to the NAD(+) site. Arg-144 provides a ligand contact to substrate. The active-site Proton acceptor is Tyr-147. NAD(+)-binding positions include Lys-151 and 180 to 184 (VDTPS). Positions 188 and 205 each coordinate substrate.

This sequence belongs to the short-chain dehydrogenases/reductases (SDR) family. In terms of assembly, homotetramer.

It is found in the cytoplasm. It carries out the reaction cis-4-hydroxy-L-proline + NAD(+) = 4-oxo-L-proline + NADH + H(+). It catalyses the reaction (R)-3-hydroxybutanoate + NAD(+) = acetoacetate + NADH + H(+). The protein operates within amino-acid metabolism. It functions in the pathway siderophore biosynthesis. NAD(H)-dependent dehydrogenase/reductase with a preference for cyclic substrates. Catalyzes stereoselective conversion of 4-oxo-L-proline to cis-4-hydroxy-L-proline, likely a detoxification mechanism for ketoprolines. Mediates the formation of 2,5-dihydroxybenzoate (2,5-DHBA), a siderophore that chelates free cytoplasmic iron, thereby regulating iron transport and homeostasis while protecting cells against free radical-induced oxidative stress. The iron-siderophore complex is imported into mitochondria, providing an iron source for mitochondrial metabolic processes in particular heme synthesis. May act as a 3-hydroxybutyrate dehydrogenase. The sequence is that of Dehydrogenase/reductase SDR family member 6 (bdh2) from Xenopus laevis (African clawed frog).